Reading from the N-terminus, the 267-residue chain is Tryptophan synthase alpha chain (267 aa).

Catalysis depends on proton acceptor residues E47 and D58.

It belongs to the TrpA family. As to quaternary structure, tetramer of two alpha and two beta chains.

It carries out the reaction (1S,2R)-1-C-(indol-3-yl)glycerol 3-phosphate + L-serine = D-glyceraldehyde 3-phosphate + L-tryptophan + H2O. It participates in amino-acid biosynthesis; L-tryptophan biosynthesis; L-tryptophan from chorismate: step 5/5. Functionally, the alpha subunit is responsible for the aldol cleavage of indoleglycerol phosphate to indole and glyceraldehyde 3-phosphate. In Chlorobium phaeobacteroides (strain DSM 266 / SMG 266 / 2430), this protein is Tryptophan synthase alpha chain.